The primary structure comprises 893 residues: Beta-adaptin-like protein C (893 aa).

The interval 593–621 (TEDEDYVEGSETGYPEASGNPVDGAASPS) is disordered.

It belongs to the adaptor complexes large subunit family. As to quaternary structure, adaptor protein complexes are heterotetramers composed of two large adaptins (beta-type subunit and alpha-type or delta-type or epsilon-type or gamma-type subunit), a medium adaptin (mu-type subunit) and a small adaptin (sigma-type subunit).

The protein localises to the golgi apparatus. The protein resides in the trans-Golgi network. It localises to the cytoplasmic vesicle. Its subcellular location is the clathrin-coated vesicle membrane. Subunit of clathrin-associated adaptor protein complex that plays a role in protein sorting in the late-Golgi/trans-Golgi network (TGN) and/or endosomes. The AP complexes mediate both the recruitment of clathrin to membranes and the recognition of sorting signals within the cytosolic tails of transmembrane cargo molecules. This chain is Beta-adaptin-like protein C (BETAC-AD), found in Arabidopsis thaliana (Mouse-ear cress).